The following is a 229-amino-acid chain: Deoxyribose-phosphate aldolase (229 aa).

Asp96 acts as the Proton donor/acceptor in catalysis. The Schiff-base intermediate with acetaldehyde role is filled by Lys166. Lys195 acts as the Proton donor/acceptor in catalysis.

It belongs to the DeoC/FbaB aldolase family. DeoC type 1 subfamily.

The protein localises to the cytoplasm. The catalysed reaction is 2-deoxy-D-ribose 5-phosphate = D-glyceraldehyde 3-phosphate + acetaldehyde. Its pathway is carbohydrate degradation; 2-deoxy-D-ribose 1-phosphate degradation; D-glyceraldehyde 3-phosphate and acetaldehyde from 2-deoxy-alpha-D-ribose 1-phosphate: step 2/2. Functionally, catalyzes a reversible aldol reaction between acetaldehyde and D-glyceraldehyde 3-phosphate to generate 2-deoxy-D-ribose 5-phosphate. This chain is Deoxyribose-phosphate aldolase, found in Micrococcus luteus (strain ATCC 4698 / DSM 20030 / JCM 1464 / CCM 169 / CCUG 5858 / IAM 1056 / NBRC 3333 / NCIMB 9278 / NCTC 2665 / VKM Ac-2230) (Micrococcus lysodeikticus).